The sequence spans 335 residues: MSISHFTALIWLGFLAVVALIALGYVLVQRSRHRQMLRFSNMEVLEKVAPSRPSPLRHAPIALMLVGLVFLTIAAAGPTSVQKVPRNRATVVLVMDVSLSMEATDVPPSRLEVAQQAGKEFVDGLTQGINLGFVTFAGTASVMQSPTTNREAVKAAIDNIKLAERTATGEGILTALQSIETLATVLGGAETPPPARIVLMSDGKQTVPDDKDVDNPRHAFTAARLAKSKGIPVSTISFGTEWGSVEIPDQDGQGGSQRVKVPVDNESLREIAKLSGGEFYTASSLEELTAVYDTLEEQIGYETTRGDASRPWLLLGMLVVAAGIVTGLLYRQRLP.

2 consecutive transmembrane segments (helical) span residues 8 to 28 (ALIW…YVLV) and 61 to 81 (IALM…PTSV). One can recognise a VWFA domain in the interval 90 to 295 (TVVLVMDVSL…EELTAVYDTL (206 aa)). The helical transmembrane segment at 310-330 (RPWLLLGMLVVAAGIVTGLLY) threads the bilayer.

Belongs to the UPF0353 family.

The protein localises to the cell membrane. The protein is UPF0353 protein NFA_34780 of Nocardia farcinica (strain IFM 10152).